The chain runs to 391 residues: tRNA (cytosine(38)-C(5))-methyltransferase (391 aa).

Residues 4–391 enclose the SAM-dependent MTase C5-type domain; that stretch reads LRVLELYSGI…VSKLLTVLCE (388 aa). Residues 13–15, Asp-34, 57–58, and Ser-76 each bind S-adenosyl-L-methionine; these read IGG and IE. Cys-79 is an active-site residue. Residue Ser-376 coordinates S-adenosyl-L-methionine.

It belongs to the class I-like SAM-binding methyltransferase superfamily. C5-methyltransferase family.

Its subcellular location is the cytoplasm. It carries out the reaction cytidine(38) in tRNA + S-adenosyl-L-methionine = 5-methylcytidine(38) in tRNA + S-adenosyl-L-homocysteine + H(+). Functionally, specifically methylates cytosine 38 in the anticodon loop of tRNA(Asp). Has higher activity on tRNA(Asp) modified with queuosine at position 34. The protein is tRNA (cytosine(38)-C(5))-methyltransferase (Trdmt1) of Rattus norvegicus (Rat).